Reading from the N-terminus, the 72-residue chain is Disintegrin sasaimin (72 aa).

The 72-residue stretch at 1–72 (EAGEECDCGA…SAGCPRNPFH (72 aa)) folds into the Disintegrin domain. Intrachain disulfides connect C6/C21, C8/C16, C15/C38, C29/C35, C34/C59, and C47/C66. The Cell attachment site signature appears at 51 to 53 (RGD).

This sequence belongs to the venom metalloproteinase (M12B) family. P-II subfamily. P-IIa sub-subfamily. In terms of assembly, monomer. As to expression, expressed by the venom gland.

It localises to the secreted. Inhibits ADP- (IC(50)=66 nM) and collagen-induced (IC(50)=100 nM) aggregation of human platelets. In vitro, inhibits adhesion of endothelial cells to vitronectin, type-I collagen and, to a lower degree, fibronectin and laminin. The polypeptide is Disintegrin sasaimin (Cerrophidion sasai (Costa Rica montane pitviper)).